The primary structure comprises 543 residues: Chaperonin GroEL (543 aa).

ATP-binding positions include 29–32 (TLGP), 86–90 (DGTTT), glycine 413, 478–480 (NAA), and aspartate 494.

The protein belongs to the chaperonin (HSP60) family. Forms a cylinder of 14 subunits composed of two heptameric rings stacked back-to-back. Interacts with the co-chaperonin GroES.

It is found in the cytoplasm. The catalysed reaction is ATP + H2O + a folded polypeptide = ADP + phosphate + an unfolded polypeptide.. In terms of biological role, together with its co-chaperonin GroES, plays an essential role in assisting protein folding. The GroEL-GroES system forms a nano-cage that allows encapsulation of the non-native substrate proteins and provides a physical environment optimized to promote and accelerate protein folding. This is Chaperonin GroEL from Lactobacillus gasseri (strain ATCC 33323 / DSM 20243 / BCRC 14619 / CIP 102991 / JCM 1131 / KCTC 3163 / NCIMB 11718 / NCTC 13722 / AM63).